The chain runs to 482 residues: ATP synthase subunit beta (482 aa).

168 to 175 (GGAGVGKT) contacts ATP.

This sequence belongs to the ATPase alpha/beta chains family. As to quaternary structure, F-type ATPases have 2 components, CF(1) - the catalytic core - and CF(0) - the membrane proton channel. CF(1) has five subunits: alpha(3), beta(3), gamma(1), delta(1), epsilon(1). CF(0) has three main subunits: a(1), b(2) and c(9-12). The alpha and beta chains form an alternating ring which encloses part of the gamma chain. CF(1) is attached to CF(0) by a central stalk formed by the gamma and epsilon chains, while a peripheral stalk is formed by the delta and b chains.

The protein resides in the cell membrane. The enzyme catalyses ATP + H2O + 4 H(+)(in) = ADP + phosphate + 5 H(+)(out). Produces ATP from ADP in the presence of a proton gradient across the membrane. The catalytic sites are hosted primarily by the beta subunits. In Nocardia farcinica (strain IFM 10152), this protein is ATP synthase subunit beta.